The primary structure comprises 358 residues: Glycerol-3-phosphate dehydrogenase [NAD(P)+] (358 aa).

Residues Ser33, Phe34, Arg54, and Lys128 each coordinate NADPH. Sn-glycerol 3-phosphate is bound by residues Lys128 and Gly156. Residue Ala160 participates in NADPH binding. Lys211, Asp264, Ser274, Arg275, and Asn276 together coordinate sn-glycerol 3-phosphate. Lys211 (proton acceptor) is an active-site residue. Arg275 contacts NADPH. NADPH is bound by residues Val299 and Glu301.

This sequence belongs to the NAD-dependent glycerol-3-phosphate dehydrogenase family.

The protein localises to the cytoplasm. The catalysed reaction is sn-glycerol 3-phosphate + NAD(+) = dihydroxyacetone phosphate + NADH + H(+). The enzyme catalyses sn-glycerol 3-phosphate + NADP(+) = dihydroxyacetone phosphate + NADPH + H(+). The protein operates within membrane lipid metabolism; glycerophospholipid metabolism. In terms of biological role, catalyzes the reduction of the glycolytic intermediate dihydroxyacetone phosphate (DHAP) to sn-glycerol 3-phosphate (G3P), the key precursor for phospholipid synthesis. In Saccharophagus degradans (strain 2-40 / ATCC 43961 / DSM 17024), this protein is Glycerol-3-phosphate dehydrogenase [NAD(P)+].